The following is a 1157-amino-acid chain: Cell division cycle and apoptosis regulator protein 1 (1157 aa).

Disordered regions lie at residues 289–365 (PVRI…PRRV) and 608–641 (LQGDRKEADGEQEEEDKEDGDAKEISTPTHWSKL). Basic and acidic residues-rich tracts occupy residues 300–341 (RRIE…DRSP) and 348–359 (ERSPRRERERSP). A coiled-coil region spans residues 601-625 (KQQLVDKLQGDRKEADGEQEEEDKE). Residues 617 to 628 (GEQEEEDKEDGD) show a composition bias toward acidic residues. Residues 643–677 (PKIMKVNDLRKELESRTLSSKGLKSQLIARLTKQL) form the SAP domain. Basic and acidic residues-rich tracts occupy residues 685–694 (EQKELEKCEK), 701–721 (ERKSEDDKEEEERKRQEELER), 804–824 (EEKKDKEKKCKKEDKRERKED), and 838–861 (SSDDKIKLEEKEERKRDDRRKEDY). 2 disordered regions span residues 685 to 721 (EQKELEKCEKEEEEEEERKSEDDKEEEERKRQEELER) and 804 to 926 (EEKK…KDKK). A compositionally biased stretch (acidic residues) spans 862-896 (REEDDPDYENQDDYEPIAAEEDDGDYDDREDDDDD). Residues 897 to 926 (SSSKDKREDKRDGNRYSKERQSKDKEKDKK) show a composition bias toward basic and acidic residues. The stretch at 1043–1128 (DVGSLLQKLE…DQLTNTIKNL (86 aa)) forms a coiled coil. Ser1157 is modified (phosphoserine).

It is found in the cytoplasm. Its subcellular location is the perinuclear region. Functionally, transcriptional coactivator for nuclear receptors which may play an important role in regulating cell growth and apoptosis. This Xenopus laevis (African clawed frog) protein is Cell division cycle and apoptosis regulator protein 1 (ccar1).